Consider the following 294-residue polypeptide: Putative glutamine amidotransferase HI_1037 (294 aa).

Cys-18 is a catalytic residue. Positions 18 to 266 constitute a Glutamine amidotransferase type-2 domain; the sequence is CQLLGMNCNT…NGGFVFFKNG (249 aa).

The chain is Putative glutamine amidotransferase HI_1037 from Haemophilus influenzae (strain ATCC 51907 / DSM 11121 / KW20 / Rd).